The following is a 357-amino-acid chain: F-box only protein 25 (357 aa).

The interaction with beta-actin stretch occupies residues 1–83 (MPFLGQDWRS…DTAAHSFYRE (83 aa)). Residues 224-271 (GLTLSDLPLHMLNNILYRFSDGWDIVTLGQVTPTLYMLSEDRRLWKRL) form the F-box domain.

In terms of assembly, part of a SCF (SKP1-cullin-F-box) protein ligase complex consisting of FBXO25, SKP1, CUL1 and RBX1. Interacts directly with SKP1 and CUL1. Interacts (via C-terminus) with actin (via N-terminus).

It is found in the nucleus. The protein operates within protein modification; protein ubiquitination. In terms of biological role, substrate-recognition component of the SCF (SKP1-CUL1-F-box protein)-type E3 ubiquitin ligase complex. May play a role in accumulation of expanded polyglutamine (polyQ) protein huntingtin (HTT). This Rattus norvegicus (Rat) protein is F-box only protein 25 (Fbxo25).